A 194-amino-acid chain; its full sequence is Xanthine phosphoribosyltransferase (194 aa).

Xanthine-binding residues include Leu20 and Asn27. 128-132 (ANGQA) contacts 5-phospho-alpha-D-ribose 1-diphosphate. Xanthine is bound at residue Lys156.

It belongs to the purine/pyrimidine phosphoribosyltransferase family. Xpt subfamily. As to quaternary structure, homodimer.

The protein localises to the cytoplasm. It catalyses the reaction XMP + diphosphate = xanthine + 5-phospho-alpha-D-ribose 1-diphosphate. The protein operates within purine metabolism; XMP biosynthesis via salvage pathway; XMP from xanthine: step 1/1. Its function is as follows. Converts the preformed base xanthine, a product of nucleic acid breakdown, to xanthosine 5'-monophosphate (XMP), so it can be reused for RNA or DNA synthesis. The sequence is that of Xanthine phosphoribosyltransferase from Bacillus licheniformis (strain ATCC 14580 / DSM 13 / JCM 2505 / CCUG 7422 / NBRC 12200 / NCIMB 9375 / NCTC 10341 / NRRL NRS-1264 / Gibson 46).